Here is a 141-residue protein sequence, read N- to C-terminus: Nucleoside diphosphate kinase (141 aa).

Residues Lys-11, Phe-59, Arg-87, Thr-93, Arg-104, and Asn-114 each contribute to the ATP site. His-117 serves as the catalytic Pros-phosphohistidine intermediate.

The protein belongs to the NDK family. As to quaternary structure, homotetramer. It depends on Mg(2+) as a cofactor.

It localises to the cytoplasm. The enzyme catalyses a 2'-deoxyribonucleoside 5'-diphosphate + ATP = a 2'-deoxyribonucleoside 5'-triphosphate + ADP. It catalyses the reaction a ribonucleoside 5'-diphosphate + ATP = a ribonucleoside 5'-triphosphate + ADP. Major role in the synthesis of nucleoside triphosphates other than ATP. The ATP gamma phosphate is transferred to the NDP beta phosphate via a ping-pong mechanism, using a phosphorylated active-site intermediate. The chain is Nucleoside diphosphate kinase from Nitrosospira multiformis (strain ATCC 25196 / NCIMB 11849 / C 71).